A 505-amino-acid polypeptide reads, in one-letter code: MAQIDFRKKINWHRRYRSPQGVKTEHEILRIFESDRGRIINSPAIRRLQQKTQVFPLERNAAVRTRLTHSMEVQQVGRYIAKEILSRMKELKLLEAYGLDELTGPFESIVEMSCLMHDIGNPPFGHFGEAAINDWFRQRLHPEDAESQPLTDDRCSVAALRLRDGEEPLNELRRKIRQDLCHFEGNAQGIRLVHTLMRMNLTWAQVGGILKYTRPAWWRGETPETHHYLMKKPGYYLSEEAYIARLRKELNLALYSRFPLTWIMEAADDISYCVADLEDAVEKRIFTVEQLYHHLHEAWGQHEKGSLFSLVVENAWEKSRSNSLSRSTEDQFFMYLRVNTLNKLVPYAAQRFIDNLPAIFAGTFNHALLEDASECSDLLKLYKNVAVKHVFSHPDVEQLELQGYRVISGLLEIYRPLLSLSLSDFTELVEKERVKRFPIESRLFHKLSTRHRLAYVEAVSKLPSDYPEFPLWEYYYRCRLLQDYISGMTDLYAWDEYRRLMAVEQ.

Residues 66 to 273 form the HD domain; that stretch reads RLTHSMEVQQ…MEAADDISYC (208 aa).

This sequence belongs to the dGTPase family. Type 1 subfamily. As to quaternary structure, homotetramer. Mg(2+) serves as cofactor.

It catalyses the reaction dGTP + H2O = 2'-deoxyguanosine + triphosphate + H(+). DGTPase preferentially hydrolyzes dGTP over the other canonical NTPs. In Shigella boydii serotype 18 (strain CDC 3083-94 / BS512), this protein is Deoxyguanosinetriphosphate triphosphohydrolase.